Here is a 473-residue protein sequence, read N- to C-terminus: Adenosylhomocysteinase (473 aa).

Residues 58-62, Asp-135, and Glu-197 contribute to the substrate site; that span reads HMTIQ. 198–200 contacts NAD(+); that stretch reads TTT. The substrate site is built by Lys-227 and Asp-231. NAD(+)-binding positions include Asn-232, Val-265, Glu-284, Asn-319, 340–342, and Asn-385; that span reads IGH. Residue His-342 participates in substrate binding. His-392 contributes to the substrate binding site. NAD(+) contacts are provided by Lys-467 and Tyr-471.

This sequence belongs to the adenosylhomocysteinase family. In terms of assembly, homotetramer; dimer of dimers. It depends on NAD(+) as a cofactor.

The protein localises to the cytoplasm. It catalyses the reaction S-adenosyl-L-homocysteine + H2O = L-homocysteine + adenosine. It functions in the pathway amino-acid biosynthesis; L-homocysteine biosynthesis; L-homocysteine from S-adenosyl-L-homocysteine: step 1/1. Its function is as follows. May play a key role in the regulation of the intracellular concentration of adenosylhomocysteine, which is a strong inhibitor of SAM-dependent methyltransferases. Catalyzes the hydrolysis of S-adenosyl-L-homocysteine into L-homocysteine and adenosine. The protein is Adenosylhomocysteinase of Bradyrhizobium elkanii.